We begin with the raw amino-acid sequence, 236 residues long: Sugar fermentation stimulation protein homolog (236 aa).

The protein belongs to the SfsA family.

The polypeptide is Sugar fermentation stimulation protein homolog (Proteus mirabilis (strain HI4320)).